A 317-amino-acid chain; its full sequence is Terpene synthase 3 (317 aa).

The short motif at 96 to 101 is the DDxx(x)D/E motif element; that stretch reads DDFYFE. The NDxxSxxxD/E motif signature appears at 223–231; sequence NDMVSFERE.

This sequence belongs to the terpene synthase family.

In terms of biological role, terpene synthase that converts its substrate farnesyl diphosphate (FPP) into the sesquiterpene CAS 137235-51-9 as a major product. Is also able to convert FPP into 9-epi-(E)-caryophyllene, alpha-neoclovene, beta-neoclovene, and 3 yet unidentified sesquiterpenes. The chain is Terpene synthase 3 from Dictyostelium purpureum (Slime mold).